We begin with the raw amino-acid sequence, 473 residues long: Cysteine--tRNA ligase (473 aa).

Zn(2+) is bound at residue Cys-29. The short motif at 31-41 is the 'HIGH' region element; sequence ATVQSAPHIGH. The Zn(2+) site is built by Cys-207, His-232, and Glu-236. Positions 263–267 match the 'KMSKS' region motif; that stretch reads KMSKS. Residue Lys-266 coordinates ATP.

It belongs to the class-I aminoacyl-tRNA synthetase family. Monomer. Zn(2+) serves as cofactor.

The protein localises to the cytoplasm. The catalysed reaction is tRNA(Cys) + L-cysteine + ATP = L-cysteinyl-tRNA(Cys) + AMP + diphosphate. The sequence is that of Cysteine--tRNA ligase from Corynebacterium kroppenstedtii (strain DSM 44385 / JCM 11950 / CIP 105744 / CCUG 35717).